Here is a 430-residue protein sequence, read N- to C-terminus: Small ribosomal subunit protein uS3m (430 aa).

It belongs to the universal ribosomal protein uS3 family.

It is found in the mitochondrion. The protein is Small ribosomal subunit protein uS3m (RPS3) of Marchantia polymorpha (Common liverwort).